The following is a 562-amino-acid chain: Gut esterase 1 (562 aa).

The first 16 residues, 1–16 (MRVLLASLLIFGACWA), serve as a signal peptide directing secretion. Cysteines 75 and 93 form a disulfide. Serine 199 acts as the Acyl-ester intermediate in catalysis. Cysteine 251 and cysteine 259 are joined by a disulfide. Active-site charge relay system residues include glutamate 320 and histidine 451. Positions 559–562 (KDEL) match the Prevents secretion from ER motif.

The protein belongs to the type-B carboxylesterase/lipase family. Expressed only in the intestine.

Its subcellular location is the endoplasmic reticulum lumen. The catalysed reaction is a carboxylic ester + H2O = an alcohol + a carboxylate + H(+). This Caenorhabditis briggsae protein is Gut esterase 1 (ges-1).